A 196-amino-acid polypeptide reads, in one-letter code: Cell division protein SepF (196 aa).

Residues 15-80 (VEDDEEFNEP…PKRSASTFSK (66 aa)) form a disordered region. A compositionally biased stretch (polar residues) spans 56-79 (RPAQSTPKPQAQTAAPKRSASTFS).

This sequence belongs to the SepF family. As to quaternary structure, homodimer. Interacts with FtsZ.

The protein resides in the cytoplasm. Cell division protein that is part of the divisome complex and is recruited early to the Z-ring. Probably stimulates Z-ring formation, perhaps through the cross-linking of FtsZ protofilaments. Its function overlaps with FtsA. This chain is Cell division protein SepF, found in Lactococcus lactis subsp. cremoris (strain SK11).